Consider the following 462-residue polypeptide: Asparagine--tRNA ligase (462 aa).

It belongs to the class-II aminoacyl-tRNA synthetase family. In terms of assembly, homodimer.

The protein localises to the cytoplasm. The catalysed reaction is tRNA(Asn) + L-asparagine + ATP = L-asparaginyl-tRNA(Asn) + AMP + diphosphate + H(+). The protein is Asparagine--tRNA ligase of Borrelia garinii subsp. bavariensis (strain ATCC BAA-2496 / DSM 23469 / PBi) (Borreliella bavariensis).